The following is a 397-amino-acid chain: Anhydro-N-acetylmuramic acid kinase (397 aa).

21 to 28 (GTSLDGVD) is a binding site for ATP. The span at 373-384 (TPTNLPSVTGAS) shows a compositional bias: polar residues. The tract at residues 373 to 397 (TPTNLPSVTGASARTPLGSLSVPGP) is disordered.

The protein belongs to the anhydro-N-acetylmuramic acid kinase family.

It carries out the reaction 1,6-anhydro-N-acetyl-beta-muramate + ATP + H2O = N-acetyl-D-muramate 6-phosphate + ADP + H(+). It participates in amino-sugar metabolism; 1,6-anhydro-N-acetylmuramate degradation. It functions in the pathway cell wall biogenesis; peptidoglycan recycling. In terms of biological role, catalyzes the specific phosphorylation of 1,6-anhydro-N-acetylmuramic acid (anhMurNAc) with the simultaneous cleavage of the 1,6-anhydro ring, generating MurNAc-6-P. Is required for the utilization of anhMurNAc either imported from the medium or derived from its own cell wall murein, and thus plays a role in cell wall recycling. This chain is Anhydro-N-acetylmuramic acid kinase, found in Salinibacter ruber (strain DSM 13855 / M31).